The following is a 314-amino-acid chain: Methionyl-tRNA formyltransferase (314 aa).

Residue 110-113 (SLLP) participates in (6S)-5,6,7,8-tetrahydrofolate binding.

Belongs to the Fmt family.

It carries out the reaction L-methionyl-tRNA(fMet) + (6R)-10-formyltetrahydrofolate = N-formyl-L-methionyl-tRNA(fMet) + (6S)-5,6,7,8-tetrahydrofolate + H(+). In terms of biological role, attaches a formyl group to the free amino group of methionyl-tRNA(fMet). The formyl group appears to play a dual role in the initiator identity of N-formylmethionyl-tRNA by promoting its recognition by IF2 and preventing the misappropriation of this tRNA by the elongation apparatus. The protein is Methionyl-tRNA formyltransferase of Bacillus mycoides (strain KBAB4) (Bacillus weihenstephanensis).